We begin with the raw amino-acid sequence, 177 residues long: Putative adenylate kinase (177 aa).

ATP contacts are provided by Gly10, Gly12, Lys13, Thr14, and Thr15. The segment at 30–50 (NLRDYALEKGIGEMKENELEI) is NMP. Residues 99-109 (ERGYGREKLGE) form an LID region. Arg100 and Lys138 together coordinate ATP.

The protein belongs to the adenylate kinase family. AK6 subfamily. In terms of assembly, interacts with uS11. Not a structural component of 40S pre-ribosomes, but transiently interacts with them by binding to uS11.

It carries out the reaction AMP + ATP = 2 ADP. It catalyses the reaction ATP + H2O = ADP + phosphate + H(+). Its function is as follows. Broad-specificity nucleoside monophosphate (NMP) kinase that catalyzes the reversible transfer of the terminal phosphate group between nucleoside triphosphates and monophosphates. Also has ATPase activity. Involved in the late maturation steps of the 30S ribosomal particles, specifically 16S rRNA maturation. While NMP activity is not required for ribosome maturation, ATPase activity is. Associates transiently with small ribosomal subunit protein uS11. ATP hydrolysis breaks the interaction with uS11. May temporarily remove uS11 from the ribosome to enable a conformational change of the ribosomal RNA that is needed for the final maturation step of the small ribosomal subunit. In Thermococcus kodakarensis (strain ATCC BAA-918 / JCM 12380 / KOD1) (Pyrococcus kodakaraensis (strain KOD1)), this protein is Putative adenylate kinase.